The chain runs to 140 residues: Putative pre-16S rRNA nuclease (140 aa).

This sequence belongs to the YqgF nuclease family.

Its subcellular location is the cytoplasm. Could be a nuclease involved in processing of the 5'-end of pre-16S rRNA. This Endomicrobium trichonymphae protein is Putative pre-16S rRNA nuclease.